A 307-amino-acid polypeptide reads, in one-letter code: Pantothenate kinase (307 aa).

87 to 94 (GSVAVGKS) contacts ATP.

This sequence belongs to the prokaryotic pantothenate kinase family.

It localises to the cytoplasm. The catalysed reaction is (R)-pantothenate + ATP = (R)-4'-phosphopantothenate + ADP + H(+). It functions in the pathway cofactor biosynthesis; coenzyme A biosynthesis; CoA from (R)-pantothenate: step 1/5. The sequence is that of Pantothenate kinase from Vibrio vulnificus (strain CMCP6).